The primary structure comprises 381 residues: Opsin-1 (381 aa).

The Extracellular portion of the chain corresponds to 1-53 (MASASLISEPSFSAYWGGSGGFANQTVVDKVPPEMLYLVDPHWYQFPPMNPLW). A glycan (N-linked (GlcNAc...) asparagine) is linked at asparagine 24. Residues 54-78 (HGLLGFVIGVLGVISVIGNGMVIYI) traverse the membrane as a helical segment. Residues 79–90 (FSTTKSLRTPSN) lie on the Cytoplasmic side of the membrane. A helical membrane pass occupies residues 91 to 115 (LLVVNLAFSDFLMMFTMSAPMGINC). At 116–130 (YYETWVLGPFMCELY) the chain is on the extracellular side. Residues cysteine 127 and cysteine 204 are joined by a disulfide bond. A helical membrane pass occupies residues 131–150 (ALFGSLFGCGSIWTMTMIAL). Residues 151 to 169 (DRYNVIVKGLSAKPMTNKT) are Cytoplasmic-facing. Residues 170 to 193 (AMLRILFIWAFSVAWTIMPLFGWN) form a helical membrane-spanning segment. At 194-217 (RYVPEGNMTACGTDYLTKDWVSRS) the chain is on the extracellular side. N-linked (GlcNAc...) asparagine glycosylation occurs at asparagine 200. A helical membrane pass occupies residues 218–245 (YILVYSFFVYLLPLGTIIYSYFFILQAV). Topologically, residues 246–280 (SAHEKQMREQRKKMNVASLRSAEASQTSAECKLAK) are cytoplasmic. A helical membrane pass occupies residues 281-304 (VALMTISLWFFGWTPYLIINFTGI). Residues 305–311 (FETMKIS) lie on the Extracellular side of the membrane. The chain crosses the membrane as a helical span at residues 312-336 (PLLTIWGSLFAKANAVFNPIVYGIS). An N6-(retinylidene)lysine modification is found at lysine 323. Topologically, residues 337–381 (HPKYRAALEKKFPSLACASSSDDNTSVASGATTVSDEKSEKSASA) are cytoplasmic. The segment covering 354–370 (ASSSDDNTSVASGATTV) has biased composition (polar residues). Residues 354 to 381 (ASSSDDNTSVASGATTVSDEKSEKSASA) form a disordered region. Residues 371 to 381 (SDEKSEKSASA) show a composition bias toward basic and acidic residues.

The protein belongs to the G-protein coupled receptor 1 family. Opsin subfamily. Phosphorylated on some or all of the serine and threonine residues present in the C-terminal region.

Its subcellular location is the cell projection. The protein resides in the rhabdomere membrane. In terms of biological role, visual pigments are the light-absorbing molecules that mediate vision. They consist of an apoprotein, opsin, covalently linked to cis-retinal. This chain is Opsin-1 (Lo1), found in Schistocerca gregaria (Desert locust).